The following is a 459-amino-acid chain: Exodeoxyribonuclease 7 large subunit (459 aa).

The protein belongs to the XseA family. Heterooligomer composed of large and small subunits.

It localises to the cytoplasm. It carries out the reaction Exonucleolytic cleavage in either 5'- to 3'- or 3'- to 5'-direction to yield nucleoside 5'-phosphates.. Functionally, bidirectionally degrades single-stranded DNA into large acid-insoluble oligonucleotides, which are then degraded further into small acid-soluble oligonucleotides. The polypeptide is Exodeoxyribonuclease 7 large subunit (Pseudomonas syringae pv. tomato (strain ATCC BAA-871 / DC3000)).